Reading from the N-terminus, the 481-residue chain is Aspartyl/glutamyl-tRNA(Asn/Gln) amidotransferase subunit B (481 aa).

Residues 29–50 (SSSKSSHTDPKNTNISPIDLGH) are disordered.

This sequence belongs to the GatB/GatE family. GatB subfamily. As to quaternary structure, heterotrimer of A, B and C subunits.

The enzyme catalyses L-glutamyl-tRNA(Gln) + L-glutamine + ATP + H2O = L-glutaminyl-tRNA(Gln) + L-glutamate + ADP + phosphate + H(+). It carries out the reaction L-aspartyl-tRNA(Asn) + L-glutamine + ATP + H2O = L-asparaginyl-tRNA(Asn) + L-glutamate + ADP + phosphate + 2 H(+). In terms of biological role, allows the formation of correctly charged Asn-tRNA(Asn) or Gln-tRNA(Gln) through the transamidation of misacylated Asp-tRNA(Asn) or Glu-tRNA(Gln) in organisms which lack either or both of asparaginyl-tRNA or glutaminyl-tRNA synthetases. The reaction takes place in the presence of glutamine and ATP through an activated phospho-Asp-tRNA(Asn) or phospho-Glu-tRNA(Gln). The polypeptide is Aspartyl/glutamyl-tRNA(Asn/Gln) amidotransferase subunit B (Malacoplasma penetrans (strain HF-2) (Mycoplasma penetrans)).